Reading from the N-terminus, the 110-residue chain is Nucleoid-associated protein Tola_2216 (110 aa).

Belongs to the YbaB/EbfC family. As to quaternary structure, homodimer.

It is found in the cytoplasm. It localises to the nucleoid. Its function is as follows. Binds to DNA and alters its conformation. May be involved in regulation of gene expression, nucleoid organization and DNA protection. This is Nucleoid-associated protein Tola_2216 from Tolumonas auensis (strain DSM 9187 / NBRC 110442 / TA 4).